The following is a 378-amino-acid chain: Cytochrome b (378 aa).

The next 4 membrane-spanning stretches (helical) occupy residues 34–54 (FGSL…FLAM), 78–99 (WFLR…FMHV), 114–134 (WNTG…GYVL), and 179–199 (FFTF…IHLL). Positions 84 and 98 each coordinate heme b. The heme b site is built by H183 and H197. H202 lines the a ubiquinone pocket. 4 consecutive transmembrane segments (helical) span residues 227–247 (YKDI…IWKF), 289–309 (LGGV…PFTH), 321–341 (LNQI…WIGA), and 348–368 (YVLT…INPL).

The protein belongs to the cytochrome b family. The main subunits of complex b-c1 are: cytochrome b, cytochrome c1 and the Rieske protein. Heme b serves as cofactor.

The protein localises to the mitochondrion inner membrane. In terms of biological role, component of the ubiquinol-cytochrome c reductase complex (complex III or cytochrome b-c1 complex) that is part of the mitochondrial respiratory chain. The b-c1 complex mediates electron transfer from ubiquinol to cytochrome c. Contributes to the generation of a proton gradient across the mitochondrial membrane that is then used for ATP synthesis. The polypeptide is Cytochrome b (MT-CYB) (Anopheles quadrimaculatus (Common malaria mosquito)).